A 223-amino-acid polypeptide reads, in one-letter code: Coiled-coil domain-containing protein 124 (223 aa).

The segment at 1–126 (MPKKFQGENT…AEKAKSHLEV (126 aa)) is disordered. Residues 15 to 82 (ARARRAEAKA…LLEEEDSKLK (68 aa)) adopt a coiled-coil conformation. Basic and acidic residues-rich tracts occupy residues 18 to 74 (RRAE…QRLL) and 99 to 126 (QIED…HLEV). Residues serine 141 and serine 194 each carry the phosphoserine modification. The disordered stretch occupies residues 204-223 (WLRSPDNPMNQRAVPFNAPK).

The protein belongs to the CCDC124 family. Associates with translationally inactive ribosomes in the nonrotated state. Interacts with RASGEF1B. In terms of tissue distribution, ubiquitously expressed.

It localises to the cytoplasm. It is found in the cytoskeleton. The protein localises to the microtubule organizing center. The protein resides in the centrosome. Its subcellular location is the midbody. Ribosome-binding protein involved in ribosome hibernation: associates with translationally inactive ribosomes and stabilizes the nonrotated conformation of the 80S ribosome, thereby promoting ribosome preservation and storage. Also required for proper progression of late cytokinetic stages. This chain is Coiled-coil domain-containing protein 124, found in Homo sapiens (Human).